The sequence spans 314 residues: MKALTKTDFNFPGQKSVYHGKVRDVYNINGEKLVMVATDRISAFDVVLPEGIPYKGQMLNQIAAKFLDATTDICPNWKMATPDPMVTVGVLCEGFPVEMIVRGYLCGSAWRTYKSGVREICGVKLPDGMRENEKFPEPIVTPTTKAEMGLHDEDISKEEILKQGLATPEEYETLEKYTLALFKRGTEIAAERGLILVDTKYEFGKHNGTIYLMDEIHTPDSSRYFYSDGYQERFEKGEPQKQLSKEFVREWLMENGFQGKDGQKVPEMTPAIVQSISDRYIELFENITGEKFVKEDTSNIAERIEKNVMNFLSK.

This sequence belongs to the SAICAR synthetase family.

The catalysed reaction is 5-amino-1-(5-phospho-D-ribosyl)imidazole-4-carboxylate + L-aspartate + ATP = (2S)-2-[5-amino-1-(5-phospho-beta-D-ribosyl)imidazole-4-carboxamido]succinate + ADP + phosphate + 2 H(+). It participates in purine metabolism; IMP biosynthesis via de novo pathway; 5-amino-1-(5-phospho-D-ribosyl)imidazole-4-carboxamide from 5-amino-1-(5-phospho-D-ribosyl)imidazole-4-carboxylate: step 1/2. This chain is Phosphoribosylaminoimidazole-succinocarboxamide synthase, found in Bacteroides thetaiotaomicron (strain ATCC 29148 / DSM 2079 / JCM 5827 / CCUG 10774 / NCTC 10582 / VPI-5482 / E50).